The chain runs to 475 residues: Ribosomal protein uS12 methylthiotransferase RimO (475 aa).

Positions 5-114 (RTVRLIRLGC…IAQRLEDVLA (110 aa)) constitute an MTTase N-terminal domain. C14, C49, C78, C174, C178, and C181 together coordinate [4Fe-4S] cluster. The region spanning 160 to 390 (LDDSPVAPLK…AGIAEEVTAD (231 aa)) is the Radical SAM core domain. Residues 393-461 (RARLGETVDV…GVDFLAAPVT (69 aa)) enclose the TRAM domain.

It belongs to the methylthiotransferase family. RimO subfamily. It depends on [4Fe-4S] cluster as a cofactor.

Its subcellular location is the cytoplasm. The catalysed reaction is L-aspartate(89)-[ribosomal protein uS12]-hydrogen + (sulfur carrier)-SH + AH2 + 2 S-adenosyl-L-methionine = 3-methylsulfanyl-L-aspartate(89)-[ribosomal protein uS12]-hydrogen + (sulfur carrier)-H + 5'-deoxyadenosine + L-methionine + A + S-adenosyl-L-homocysteine + 2 H(+). Its function is as follows. Catalyzes the methylthiolation of an aspartic acid residue of ribosomal protein uS12. This chain is Ribosomal protein uS12 methylthiotransferase RimO, found in Acidothermus cellulolyticus (strain ATCC 43068 / DSM 8971 / 11B).